Consider the following 547-residue polypeptide: Chaperonin GroEL (547 aa).

Residues 30–33, lysine 51, 87–91, glycine 414, 478–480, and aspartate 494 each bind ATP; these read TLGP, DGTTT, and NAA.

This sequence belongs to the chaperonin (HSP60) family. Forms a cylinder of 14 subunits composed of two heptameric rings stacked back-to-back. Interacts with the co-chaperonin GroES.

Its subcellular location is the cytoplasm. It carries out the reaction ATP + H2O + a folded polypeptide = ADP + phosphate + an unfolded polypeptide.. Its function is as follows. Together with its co-chaperonin GroES, plays an essential role in assisting protein folding. The GroEL-GroES system forms a nano-cage that allows encapsulation of the non-native substrate proteins and provides a physical environment optimized to promote and accelerate protein folding. This is Chaperonin GroEL from Klebsiella pneumoniae.